The sequence spans 338 residues: Ferrochelatase (338 aa).

The Fe cation site is built by histidine 210 and glutamate 291.

This sequence belongs to the ferrochelatase family.

The protein resides in the cytoplasm. The catalysed reaction is heme b + 2 H(+) = protoporphyrin IX + Fe(2+). The protein operates within porphyrin-containing compound metabolism; protoheme biosynthesis; protoheme from protoporphyrin-IX: step 1/1. Catalyzes the ferrous insertion into protoporphyrin IX. The sequence is that of Ferrochelatase from Helicobacter acinonychis (strain Sheeba).